Here is a 198-residue protein sequence, read N- to C-terminus: Tumor necrosis factor alpha-induced protein 8 (198 aa).

Residues 49-83 are a coiled coil; that stretch reads EVLDELYRVTKEYTQNKKEAEKIIKNLIKTVIKLA.

It belongs to the TNFAIP8 family.

Its subcellular location is the cytoplasm. In terms of biological role, acts as a negative mediator of apoptosis. Suppresses the TNF-mediated apoptosis by inhibiting caspase-8 activity but not the processing of procaspase-8, subsequently resulting in inhibition of BID cleavage and caspase-3 activation. This Bos taurus (Bovine) protein is Tumor necrosis factor alpha-induced protein 8 (TNFAIP8).